Consider the following 205-residue polypeptide: Holliday junction branch migration complex subunit RuvA (205 aa).

Residues 1–64 (MIGKLKGTID…EDQLKLFGFL (64 aa)) are domain I. The tract at residues 65-143 (SALEREWFRL…AFSGEMAPSI (79 aa)) is domain II. Residues 144-153 (GLKQELGEGV) are flexible linker. The domain III stretch occupies residues 153-205 (VAAAPVADAVSALTNLGYSRDQAANAVAAALKNGGEGGDSAKLIRLGLKELSR).

The protein belongs to the RuvA family. Homotetramer. Forms an RuvA(8)-RuvB(12)-Holliday junction (HJ) complex. HJ DNA is sandwiched between 2 RuvA tetramers; dsDNA enters through RuvA and exits via RuvB. An RuvB hexamer assembles on each DNA strand where it exits the tetramer. Each RuvB hexamer is contacted by two RuvA subunits (via domain III) on 2 adjacent RuvB subunits; this complex drives branch migration. In the full resolvosome a probable DNA-RuvA(4)-RuvB(12)-RuvC(2) complex forms which resolves the HJ.

The protein resides in the cytoplasm. The RuvA-RuvB-RuvC complex processes Holliday junction (HJ) DNA during genetic recombination and DNA repair, while the RuvA-RuvB complex plays an important role in the rescue of blocked DNA replication forks via replication fork reversal (RFR). RuvA specifically binds to HJ cruciform DNA, conferring on it an open structure. The RuvB hexamer acts as an ATP-dependent pump, pulling dsDNA into and through the RuvAB complex. HJ branch migration allows RuvC to scan DNA until it finds its consensus sequence, where it cleaves and resolves the cruciform DNA. This is Holliday junction branch migration complex subunit RuvA from Rhizobium meliloti (strain 1021) (Ensifer meliloti).